The following is a 153-amino-acid chain: Actin-related protein 2/3 complex subunit 5-like protein (153 aa).

Residue serine 64 is modified to Phosphoserine.

It belongs to the ARPC5 family. In terms of assembly, may be a component of the Arp2/3 complex in which it may replace ARPC5.

The protein resides in the cytoplasm. Its subcellular location is the cytoskeleton. It localises to the cell projection. Functionally, may function as component of the Arp2/3 complex which is involved in regulation of actin polymerization and together with an activating nucleation-promoting factor (NPF) mediates the formation of branched actin networks. This Bos taurus (Bovine) protein is Actin-related protein 2/3 complex subunit 5-like protein (ARPC5L).